Consider the following 129-residue polypeptide: DNA-directed RNA polymerase III subunit rpc9 (129 aa).

It belongs to the eukaryotic RPC9 RNA polymerase subunit family. In terms of assembly, component of the RNA polymerase III (Pol III) complex.

It is found in the cytoplasm. Its subcellular location is the nucleus. Functionally, DNA-dependent RNA polymerase catalyzes the transcription of DNA into RNA using the four ribonucleoside triphosphates as substrates. Specific peripheric component of RNA polymerase III which synthesizes small RNAs, such as 5S rRNA and tRNAs. The protein is DNA-directed RNA polymerase III subunit rpc9 (rpc17) of Schizosaccharomyces pombe (strain 972 / ATCC 24843) (Fission yeast).